The chain runs to 428 residues: MNFDVVIIGGGLAGLTCGIALQTQGKQCVIINNGQAAIDFSSGSLDLLGQLPSGRQIQHFEQNYTALYQQAAQHPYALVGKDKVIEKARQFEQLAQTLNLGLVGTCDKNHFRVTPLGGLRPTWLSPNSVPIVTNEEMFPHRKIAVLGIEGYHDFQPQLLAENLVQHAQFAHCEVTTGYLNIPELDHLRHQSREFRSVNIAQLLEHKLAFSDLVREIREAVNGASAVFLPACFGLETQEFFSALKQATQLELFELPTLPPSLLGMRQHKQLTQHFKQLGGLMMNGDKVIAADVHHQRVTQVYTQLHQEIPIQAKDVVLASGSFFSKGLVAEFEKIREPIFALDLVENDRFNLQDRMTWTHSRFSAPQPYQQTGVVIDEHCRARKSGQFFENLYAIGNIVGGFNGIELGCGSGVAIVTALVAAEQIGGEK.

This sequence belongs to the anaerobic G-3-P dehydrogenase subunit B family. In terms of assembly, composed of a catalytic GlpA/B dimer and of membrane bound GlpC. It depends on FMN as a cofactor.

It catalyses the reaction a quinone + sn-glycerol 3-phosphate = dihydroxyacetone phosphate + a quinol. Its pathway is polyol metabolism; glycerol degradation via glycerol kinase pathway; glycerone phosphate from sn-glycerol 3-phosphate (anaerobic route): step 1/1. Its function is as follows. Conversion of glycerol 3-phosphate to dihydroxyacetone. Uses fumarate or nitrate as electron acceptor. The protein is Anaerobic glycerol-3-phosphate dehydrogenase subunit B of Pasteurella multocida (strain Pm70).